The sequence spans 708 residues: tRNA(Met) cytidine acetyltransferase TmcA (708 aa).

ATP-binding positions include Gln189, 215 to 224 (GRGKTSALGL), and Arg357. The 177-residue stretch at 398–574 (PECVEQPERL…YSLLMVRGEH (177 aa)) folds into the N-acetyltransferase domain. Acetyl-CoA-binding positions include 502-504 (IAV) and 509-515 (QRQGIGS).

This sequence belongs to the RNA cytidine acetyltransferase family. TmcA subfamily.

It localises to the cytoplasm. The enzyme catalyses cytidine(34) in elongator tRNA(Met) + acetyl-CoA + ATP + H2O = N(4)-acetylcytidine(34) in elongator tRNA(Met) + ADP + phosphate + CoA + H(+). Catalyzes the formation of N(4)-acetylcytidine (ac(4)C) at the wobble position of tRNA(Met), by using acetyl-CoA as an acetyl donor and ATP (or GTP). This Vibrio cholerae serotype O1 (strain ATCC 39315 / El Tor Inaba N16961) protein is tRNA(Met) cytidine acetyltransferase TmcA.